We begin with the raw amino-acid sequence, 72 residues long: DNA-directed RNA polymerase subunit omega (72 aa).

Belongs to the RNA polymerase subunit omega family. As to quaternary structure, the RNAP catalytic core consists of 2 alpha, 1 beta, 1 beta' and 1 omega subunit. When a sigma factor is associated with the core the holoenzyme is formed, which can initiate transcription.

The catalysed reaction is RNA(n) + a ribonucleoside 5'-triphosphate = RNA(n+1) + diphosphate. Promotes RNA polymerase assembly. Latches the N- and C-terminal regions of the beta' subunit thereby facilitating its interaction with the beta and alpha subunits. This chain is DNA-directed RNA polymerase subunit omega, found in Francisella tularensis subsp. tularensis (strain FSC 198).